Reading from the N-terminus, the 514-residue chain is Alpha-1B adrenergic receptor (514 aa).

The Extracellular segment spans residues 1–45 (MNPDLDTGHNTSAPAHWGELKDANFTGPNQTSSNSTLPQLDVTRA). N-linked (GlcNAc...) asparagine glycans are attached at residues N10, N24, N29, and N34. A helical transmembrane segment spans residues 46–69 (ISVGCLGAFILFAIVGNILVILSV). At 70-82 (ACNRHLRTPTNYF) the chain is on the cytoplasmic side. A helical transmembrane segment spans residues 83 to 104 (IVNLAIADLLLSFTDLPFSATL). Residues 105 to 114 (EVLGYWVLGR) are Extracellular-facing. Residues 115-140 (IFCDIWAAVDVLCCTASILSLCAISI) form a helical membrane-spanning segment. Cysteines 117 and 194 form a disulfide. Over 141–160 (DRYIGVRYSLQYPTLVTRRK) the chain is Cytoplasmic. Residues 161 to 183 (AILALLSVWVLSTVISIGPLLGW) traverse the membrane as a helical segment. Over 184–200 (KEPAPNDDKECGVTEEP) the chain is Extracellular. The chain crosses the membrane as a helical span at residues 201 to 223 (FYALFSSLGSFYIPLAVILVMYC). The Cytoplasmic portion of the chain corresponds to 224–294 (RVYIVAKRTT…FSREKKAAKT (71 aa)). T263 is modified (phosphothreonine). Residues 295-318 (LGIVVGMFILCWLPFFIALPLGSL) form a helical membrane-spanning segment. The Extracellular segment spans residues 319–325 (FSTLKPP). The chain crosses the membrane as a helical span at residues 326 to 350 (DAVFKVVFWLGYFNSCLNPIIYPCS). Over 351–514 (SKEFKRAFMR…SNMPLAPGHF (164 aa)) the chain is Cytoplasmic. C364 carries S-palmitoyl cysteine lipidation. The Nuclear localization signal motif lies at 367-377 (RGGRRRRRRRR). Disordered stretches follow at residues 391–429 (GGSLERSQSRKDSLDDSGSCMSGSQRTLPSASPSPGYLG) and 473–514 (LGEP…PGHF). Residues 409 to 423 (SCMSGSQRTLPSASP) show a composition bias toward polar residues.

The protein belongs to the G-protein coupled receptor 1 family. Adrenergic receptor subfamily. ADRA1B sub-subfamily. In terms of assembly, homo- and heterooligomer. Heterooligomerizes with ADRA1B homooligomers in cardiac myocytes. Interacts with CAVIN4.

Its subcellular location is the nucleus membrane. It is found in the cell membrane. The protein resides in the cytoplasm. It localises to the membrane. The protein localises to the caveola. This alpha-adrenergic receptor mediates its action by association with G proteins that activate a phosphatidylinositol-calcium second messenger system. Its effect is mediated by G(q) and G(11) proteins. Nuclear ADRA1A-ADRA1B heterooligomers regulate phenylephrine (PE)-stimulated ERK signaling in cardiac myocytes. The sequence is that of Alpha-1B adrenergic receptor (Adra1b) from Mus musculus (Mouse).